A 207-amino-acid chain; its full sequence is Guanylate kinase (207 aa).

Residues Gly6–Glu185 enclose the Guanylate kinase-like domain. An ATP-binding site is contributed by Gly13–Gly20.

It belongs to the guanylate kinase family.

Its subcellular location is the cytoplasm. The catalysed reaction is GMP + ATP = GDP + ADP. In terms of biological role, essential for recycling GMP and indirectly, cGMP. The sequence is that of Guanylate kinase from Staphylococcus epidermidis (strain ATCC 12228 / FDA PCI 1200).